The chain runs to 154 residues: Egg-lysin (154 aa).

An N-terminal signal peptide occupies residues 1-18; that stretch reads MKLFVLCIFAMMATLAMS.

As to quaternary structure, homodimer. Sperm.

Its function is as follows. Dissolves the egg vitelline layer nonenzymatically during fertilization. It creates a hole of about 3 mu-m in diameter through which the sperm pass. In Haliotis kamtschatkana (Pinto abalone), this protein is Egg-lysin.